The primary structure comprises 111 residues: COX assembly mitochondrial protein (111 aa).

A CHCH domain is found at 39-82 (YKKCANFVQAMADCAKANGMKVFPTCDKQRDEMKSCLLFYQTDE). Short sequence motifs (cx9C motif) lie at residues 42-52 (CANFVQAMADC) and 64-74 (CDKQRDEMKSC). Disulfide bonds link Cys-42–Cys-74 and Cys-52–Cys-64.

This sequence belongs to the CMC family.

It is found in the mitochondrion inner membrane. Its function is as follows. Required for mitochondrial cytochrome c oxidase (COX) assembly and respiration. Binds copper. May be involved in copper trafficking and distribution to mitochondrial COX and SOD1. The chain is COX assembly mitochondrial protein (CMC1) from Saccharomyces cerevisiae (strain YJM789) (Baker's yeast).